The following is a 172-amino-acid chain: Ribosome maturation factor RimM (172 aa).

The PRC barrel domain maps to 97–170; it reads DDEYYYDEII…LITIDVLEGL (74 aa).

The protein belongs to the RimM family. As to quaternary structure, binds ribosomal protein uS19.

It localises to the cytoplasm. Functionally, an accessory protein needed during the final step in the assembly of 30S ribosomal subunit, possibly for assembly of the head region. Essential for efficient processing of 16S rRNA. May be needed both before and after RbfA during the maturation of 16S rRNA. It has affinity for free ribosomal 30S subunits but not for 70S ribosomes. The protein is Ribosome maturation factor RimM of Leuconostoc citreum (strain KM20).